A 370-amino-acid chain; its full sequence is 3-dehydroquinate synthase (370 aa).

Residues 112–116 (GVVGD), 136–137 (TS), lysine 149, lysine 158, and 176–179 (TLRT) contribute to the NAD(+) site. Zn(2+) is bound by residues glutamate 191, histidine 254, and histidine 276.

This sequence belongs to the sugar phosphate cyclases superfamily. Dehydroquinate synthase family. Requires Co(2+) as cofactor. Zn(2+) serves as cofactor. The cofactor is NAD(+).

It is found in the cytoplasm. It catalyses the reaction 7-phospho-2-dehydro-3-deoxy-D-arabino-heptonate = 3-dehydroquinate + phosphate. Its pathway is metabolic intermediate biosynthesis; chorismate biosynthesis; chorismate from D-erythrose 4-phosphate and phosphoenolpyruvate: step 2/7. Functionally, catalyzes the conversion of 3-deoxy-D-arabino-heptulosonate 7-phosphate (DAHP) to dehydroquinate (DHQ). This chain is 3-dehydroquinate synthase, found in Xanthomonas oryzae pv. oryzae (strain PXO99A).